The following is a 281-amino-acid chain: Protein-S-isoprenylcysteine O-methyltransferase (281 aa).

Residues 1–2 (ML) are Cytoplasmic-facing. A helical transmembrane segment spans residues 3 to 29 (SPAGKISLQSFTGSSLVFFVICMFNHY). Residues 30–35 (YGITNL) are Lumenal-facing. Residues 36–53 (VVNTLIVFFYAVNVYFFL) form a helical membrane-spanning segment. Residues 54-58 (KFFYN) lie on the Cytoplasmic side of the membrane. The helical transmembrane segment at 59 to 85 (EFAFAIAIRAAFLGLVLVLGLYIKLVA) threads the bilayer. Residues 86–88 (PPN) lie on the Lumenal side of the membrane. The helical transmembrane segment at 89–113 (IQIFGGYMSVMALFHYSEFLAIAIV) threads the bilayer. Over 114–118 (QPKQV) the chain is Cytoplasmic. Residues 119–149 (STDSFVINHSPQYTIAAVSSWVEFFIETYFF) traverse the membrane as a helical segment. At 150 to 155 (PGLKEI) the chain is on the lumenal side. The helical transmembrane segment at 156–181 (HWLSNIGLCVCILGEVLRKTAILTAG) threads the bilayer. Residues 182–208 (SNFNHLVQCEKSSDHVLVTHGVYAWFR) are Cytoplasmic-facing. Residues glutamine 189, 196–199 (HVLV), tyrosine 204, and 209–212 (HPSY) contribute to the S-adenosyl-L-methionine site. A helical transmembrane segment spans residues 209-226 (HPSYVGWFYWSIGTQIIL). Topologically, residues 227–229 (INP) are lumenal. The chain crosses the membrane as a helical span at residues 230-243 (LCIPAYTLASWMFF). Residues 244–281 (KERIYIEESMLLSFFGQQYCDYQQQVGTGIPFIEGYKI) lie on the Cytoplasmic side of the membrane. Residue arginine 246 coordinates substrate. Glutamate 250 provides a ligand contact to S-adenosyl-L-methionine.

Belongs to the class VI-like SAM-binding methyltransferase superfamily. Isoprenylcysteine carboxyl methyltransferase family.

Its subcellular location is the endoplasmic reticulum membrane. The catalysed reaction is [protein]-C-terminal S-[(2E,6E)-farnesyl]-L-cysteine + S-adenosyl-L-methionine = [protein]-C-terminal S-[(2E,6E)-farnesyl]-L-cysteine methyl ester + S-adenosyl-L-homocysteine. In terms of biological role, catalyzes the post-translational methylation of isoprenylated C-terminal cysteine residues. The protein is Protein-S-isoprenylcysteine O-methyltransferase of Tribolium castaneum (Red flour beetle).